Here is a 292-residue protein sequence, read N- to C-terminus: Short chain dehydrogenase/reductase CPUR_05418 (292 aa).

Ile44 and Arg156 together coordinate NADP(+). Active-site proton donor residues include Ser172 and Tyr186. Residues Tyr186, Lys190, Ile221, and Thr223 each contribute to the NADP(+) site. The active-site Lowers pKa of active site Tyr is the Lys190.

Belongs to the short-chain dehydrogenases/reductases (SDR) family.

It functions in the pathway secondary metabolite biosynthesis. Its function is as follows. Short chain dehydrogenase/reductase; part of the ergochrome gene cluster responsible for the typical purple-black color of the ergot sclerotia. The ergochrome gene cluster produces several ergot pigments including the yellow ergochrome secalonic acid and its derivatives, as well as the red anthraquinones endocrocin and clavorubin. The pathway begins with the synthesis of atrochrysone thioester by the polyketide synthase (PKS) CPUR_05437. The atrochrysone carboxyl ACP thioesterase CPUR_05436 then breaks the thioester bond and releases the atrochrysone carboxylic acid from CPUR_05437. The atrochrysone carboxylic acid is then converted to atrochrysone which is further transformed into emodin anthrone. The next step is performed by the anthrone oxygenase CPUR_05434 that catalyzes the oxidation of emodinanthrone to emodin. Emodin is further modified to yield monodictyphenone via several steps involving CPUR_05427, CPUR_05428, CPUR_05429 and CPUR_05430. The short chain dehydrogenase/reductase CPUR_05418 then catalyzes the C-5 ketoreduction to give the xanthone skeleton of the monomeric units. Ergochromes formation requires further dimerization steps of different xanthone units, probably catalyzed by the cytochrome P450 monooxygenase CPUR_05419. CPUR_05425, CPUR_05426 and CPUR_05431 are unique to Claviceps, thus it is likely that they are involved in further modification of xanthone units or in their dimerization. The yellow ergochromes and the red anthraquinone pigments endocrocin and clavorubin are products from the same PKS derived precursors and the latter are likely shunt products in the pathway of xanthone biosynthesis. It is proposed that atrochrysone carboxylic acid released from the PKS CPUR_05437 can also be converted to endocrocin anthrone which is further oxidized into endocrocin by CPUR_05435. Endocrocin could be then modified to clavorubin, possibly by CPUR_05423 and CPUR_05431. Clavorubin is the principal anthraquinone metabolite produced by the cluster with a much higher yield compared to endocrocin. The protein is Short chain dehydrogenase/reductase CPUR_05418 of Claviceps purpurea (strain 20.1) (Ergot fungus).